Here is a 444-residue protein sequence, read N- to C-terminus: MREIVLTQTGQCGNQIGAKFWEVISDEHAIDSAGTYHGDSHLQLERINVHHHEASGGRYVPRAVLVDLEPGTMDSVHSGPFGQVFRPDNFISGQCGAGNNWAKGRYTEGAELTESVMDVVRKEAESCDCLQGFQLTHSLGGGTGSGMGTLLISKIREEYPDRIINTFSILPSPKVSDTVVEPYNATLSVHQLIENADETFCIDNEALYDICSRTLKLPTPTYGDLNHLVSATMSGVTTCLRFPGQLNADLRKLAVNMVPFPRLHFFMPGFAPLTSRGSQQYRALTVAELTQQMFDAKNMMAACDPRHGCYLTVAAIFRGRMPMREVDEQMFNIQDKNSSYFADWFPDNVKTAVCDIPPRGLKMSATFIGNNAAIQELFTCVSEQFTAMFRRKAFLHWYTGEGMDEMEFTEAESNMNDLVSEYQQYQDATAEEEEDEEYAEEEVA.

Residues 1-4 carry the MREI motif motif; it reads MREI. Positions 11, 69, 138, 142, 143, and 144 each coordinate GTP. E69 is a Mg(2+) binding site. Residue S172 is modified to Phosphoserine; by CDK1. 2 residues coordinate GTP: N204 and N226. Residues 421–444 form a disordered region; that stretch reads EYQQYQDATAEEEEDEEYAEEEVA. Over residues 429-444 the composition is skewed to acidic residues; that stretch reads TAEEEEDEEYAEEEVA. E436 is modified (5-glutamyl polyglutamate).

The protein belongs to the tubulin family. In terms of assembly, dimer of alpha and beta chains. A typical microtubule is a hollow water-filled tube with an outer diameter of 25 nm and an inner diameter of 15 nM. Alpha-beta heterodimers associate head-to-tail to form protofilaments running lengthwise along the microtubule wall with the beta-tubulin subunit facing the microtubule plus end conferring a structural polarity. Microtubules usually have 13 protofilaments but different protofilament numbers can be found in some organisms and specialized cells. Mg(2+) is required as a cofactor. Some glutamate residues at the C-terminus are polyglutamylated, resulting in polyglutamate chains on the gamma-carboxyl group. Polyglutamylation plays a key role in microtubule severing by spastin (SPAST). SPAST preferentially recognizes and acts on microtubules decorated with short polyglutamate tails: severing activity by SPAST increases as the number of glutamates per tubulin rises from one to eight, but decreases beyond this glutamylation threshold. Glutamylation is also involved in cilia motility. In terms of processing, some glutamate residues at the C-terminus are monoglycylated but not polyglycylated due to the absence of functional TTLL10 in human. Monoglycylation is mainly limited to tubulin incorporated into cilia and flagella axonemes, which is required for their stability and maintenance. Flagella glycylation controls sperm motility. Both polyglutamylation and monoglycylation can coexist on the same protein on adjacent residues, and lowering glycylation levels increases polyglutamylation, and reciprocally. Post-translationally, phosphorylated on Ser-172 by CDK1 during the cell cycle, from metaphase to telophase, but not in interphase. This phosphorylation inhibits tubulin incorporation into microtubules.

The protein resides in the cytoplasm. The protein localises to the cytoskeleton. Tubulin is the major constituent of microtubules, a cylinder consisting of laterally associated linear protofilaments composed of alpha- and beta-tubulin heterodimers. Microtubules grow by the addition of GTP-tubulin dimers to the microtubule end, where a stabilizing cap forms. Below the cap, tubulin dimers are in GDP-bound state, owing to GTPase activity of alpha-tubulin. In Homo sapiens (Human), this protein is Tubulin beta 8B.